A 556-amino-acid chain; its full sequence is Genetic interactor of prohibitins 3, mitochondrial (556 aa).

A mitochondrion-targeting transit peptide spans 1–21 (MLNLCHALRGVRQFSCSVIVK). Residues 113–305 (ESTLNDILNY…LFDLPGYSTS (193 aa)) form the CP-type G domain.

This sequence belongs to the TRAFAC class YlqF/YawG GTPase family. GEP3 subfamily.

It is found in the mitochondrion. Functionally, interacts genetically with prohibitins and thus may be involved in the mitochondrial lipid metabolism. The protein is Genetic interactor of prohibitins 3, mitochondrial (GEP3) of Saccharomyces cerevisiae (strain Zymaflore VL3) (Baker's yeast).